A 172-amino-acid polypeptide reads, in one-letter code: Translocator protein 2 (172 aa).

The next 5 membrane-spanning stretches (helical) occupy residues 3–23 (PQGAIFVALPHLGPILVSLLT), 45–65 (VLLAGWITIYFVMGYASYLVW), 80–100 (LGLYAVQLAVSWAVLIFFFAA), 104–124 (GLALLHMLLLYGLVVSTALIW), and 130–150 (LAAVLLLPYLAWLTVTASIAY).

Belongs to the TspO/BZRP family. In terms of assembly, homotetramer. May also form homodimer. Expressed in erythrocytes (at protein level).

Its subcellular location is the endoplasmic reticulum membrane. The protein localises to the cell membrane. Cholesterol-binding protein involved in the redistribution of cholesterol from lipid droplets to the endoplasmic reticulum. Required to meet cholesterol demands during erythropoietic differentiation. May play a role in transport processes at the plasma membrane of erythrocytes, including regulating VDAC-mediated ATP export, and import of the heme precursors protoporphyrin IX and 5-aminolevulinic acid. The chain is Translocator protein 2 from Canis lupus familiaris (Dog).